A 131-amino-acid polypeptide reads, in one-letter code: UPF0102 protein YraN (131 aa).

It belongs to the UPF0102 family.

In Salmonella arizonae (strain ATCC BAA-731 / CDC346-86 / RSK2980), this protein is UPF0102 protein YraN.